Here is a 310-residue protein sequence, read N- to C-terminus: UDP-N-acetylenolpyruvoylglucosamine reductase (310 aa).

One can recognise an FAD-binding PCMH-type domain in the interval Lys23–Gly188. Arg168 is an active-site residue. Ser217 acts as the Proton donor in catalysis. Residue Glu287 is part of the active site.

The protein belongs to the MurB family. It depends on FAD as a cofactor.

It localises to the cytoplasm. The catalysed reaction is UDP-N-acetyl-alpha-D-muramate + NADP(+) = UDP-N-acetyl-3-O-(1-carboxyvinyl)-alpha-D-glucosamine + NADPH + H(+). Its pathway is cell wall biogenesis; peptidoglycan biosynthesis. In terms of biological role, cell wall formation. This is UDP-N-acetylenolpyruvoylglucosamine reductase from Rickettsia bellii (strain OSU 85-389).